Here is a 237-residue protein sequence, read N- to C-terminus: Oil body-associated protein 2C (237 aa).

Belongs to the OBAP family.

The sequence is that of Oil body-associated protein 2C from Arabidopsis thaliana (Mouse-ear cress).